A 449-amino-acid chain; its full sequence is Endoglucanase A (449 aa).

The segment at residues Met-1 to Ala-31 is a signal peptide (tat-type signal). In terms of domain architecture, CBM2 spans Ala-32–Thr-137. Cys-35 and Cys-134 are disulfide-bonded. The disordered stretch occupies residues Phe-127–Pro-170. Low complexity predominate over residues Thr-132–Thr-141. The linker ('hinge') (Pro-Thr box) stretch occupies residues Pro-139–Pro-168. A compositionally biased stretch (pro residues) spans Ser-142–Thr-167. Asp-247 is an active-site residue. Cystine bridges form between Cys-248–Cys-291 and Cys-390–Cys-426. The active-site Proton donor is Asp-283. Catalysis depends on Asp-423, which acts as the Nucleophile. A catalytic region spans residues Glu-438–Trp-449.

This sequence belongs to the glycosyl hydrolase 6 (cellulase B) family. Post-translationally, the linker region (also termed 'hinge') may be a potential site for proteolysis. Predicted to be exported by the Tat system. The position of the signal peptide cleavage has not been experimentally proven.

The catalysed reaction is Endohydrolysis of (1-&gt;4)-beta-D-glucosidic linkages in cellulose, lichenin and cereal beta-D-glucans.. In terms of biological role, the biological conversion of cellulose to glucose generally requires three types of hydrolytic enzymes: (1) Endoglucanases which cut internal beta-1,4-glucosidic bonds; (2) Exocellobiohydrolases that cut the disaccharide cellobiose from the non-reducing end of the cellulose polymer chain; (3) Beta-1,4-glucosidases which hydrolyze the cellobiose and other short cello-oligosaccharides to glucose. The polypeptide is Endoglucanase A (cenA) (Cellulomonas fimi).